A 517-amino-acid chain; its full sequence is NADH-quinone oxidoreductase subunit N (517 aa).

The next 14 helical transmembrane spans lie at 14-34 (LAPTLILLGAALVGVLVEAFV), 40-60 (HMVQLTVAMLAVLSALTMVVV), 77-97 (GPALFLQGAILVLAAMALLLI), 131-151 (ATEVYPLTSFAVGGMLIFVAA), 154-174 (LLTMFIALEVLSLPLYLLCAL), 189-209 (YFLLGAYASAFFLFGVALVYG), 238-258 (VLLFGGMALIAIGLLFKAAAA), 272-292 (PTPITGFMAACTKVAAFGALL), 306-326 (FTPILGVVAVLTMLVGAVLAV), 334-354 (LLAYSSIANAGYLLVGVLAPS), 362-382 (MFYLVAYGFSVLAAFAVVTLV), 404-424 (FYAGLFTFILLAFAGIPLTSG), 451-471 (SMVLAFPYLRVVVLMWLSEPG), and 481-501 (GWLTSAALTIGVVATLVLGVV).

This sequence belongs to the complex I subunit 2 family. As to quaternary structure, NDH-1 is composed of 14 different subunits. Subunits NuoA, H, J, K, L, M, N constitute the membrane sector of the complex.

The protein resides in the cell membrane. It carries out the reaction a quinone + NADH + 5 H(+)(in) = a quinol + NAD(+) + 4 H(+)(out). In terms of biological role, NDH-1 shuttles electrons from NADH, via FMN and iron-sulfur (Fe-S) centers, to quinones in the respiratory chain. The immediate electron acceptor for the enzyme in this species is believed to be a menaquinone. Couples the redox reaction to proton translocation (for every two electrons transferred, four hydrogen ions are translocated across the cytoplasmic membrane), and thus conserves the redox energy in a proton gradient. The polypeptide is NADH-quinone oxidoreductase subunit N (Salinispora arenicola (strain CNS-205)).